The chain runs to 117 residues: Fluoride-specific ion channel FluC 2 (117 aa).

4 helical membrane-spanning segments follow: residues 1–21, 33–53, 60–80, and 95–115; these read MISI…RSAI, LPIA…LTIG, WFPA…STLA, and LFLN…YIGY. Na(+) is bound by residues glycine 71 and threonine 74.

The protein belongs to the fluoride channel Fluc/FEX (TC 1.A.43) family.

Its subcellular location is the cell membrane. The catalysed reaction is fluoride(in) = fluoride(out). With respect to regulation, na(+) is not transported, but it plays an essential structural role and its presence is essential for fluoride channel function. Its function is as follows. Fluoride-specific ion channel. Important for reducing fluoride concentration in the cell, thus reducing its toxicity. The chain is Fluoride-specific ion channel FluC 2 from Staphylococcus aureus (strain COL).